Here is a 974-residue protein sequence, read N- to C-terminus: Zinc finger protein 280D (974 aa).

Residues K44, K46, K86, K99, K138, K201, K222, K245, K287, and K304 each participate in a glycyl lysine isopeptide (Lys-Gly) (interchain with G-Cter in SUMO2) cross-link. The disordered stretch occupies residues 188-216 (KRPSGSDISSVNPKKPKPSENTSGIDASS). 2 consecutive C2H2-type zinc fingers follow at residues 333–355 (FKCFSCLKVLKNNIRFMNHMKHH) and 370–393 (TTCQHCYRQFPTPFQLQCHIESTH). The C2H2-type 3; degenerate zinc-finger motif lies at 400 to 424 (TICKICELSFETEQILLQHMKDNHK). 2 C2H2-type zinc fingers span residues 430-453 (YICQVCNYRSSLFSEVESHFRTSH) and 459-481 (LLCPFCLKVIKIATPYMHHYMKH). Disordered stretches follow at residues 507–624 (TQHH…KVNT), 751–797 (IKTE…EGTG), and 815–974 (VTVS…EERS). Over residues 539 to 557 (SGSSVTPSISPSTSTLQLS) the composition is skewed to low complexity. The residue at position 557 (S557) is a Phosphoserine. The segment covering 571–587 (KLTTSTPNTTISDPSKA) has biased composition (polar residues). A compositionally biased stretch (low complexity) spans 591-611 (KSNGSKSKNKSKVSNMQKKQS). Positions 612-624 (TLSSSNKKSKVNT) are enriched in polar residues. K752 is covalently cross-linked (Glycyl lysine isopeptide (Lys-Gly) (interchain with G-Cter in SUMO2)). The segment covering 763–775 (VSKETARHSRAEG) has biased composition (basic and acidic residues). Residues 817–829 (VSDTENVSSSKNI) are compositionally biased toward polar residues. The segment covering 830 to 860 (LSHDPDVGTDTMEKEEKTHHACQEMELKVDQ) has biased composition (basic and acidic residues). Residues 861–884 (SSESTNPTEAELSSETRQGLQLTS) show a composition bias toward polar residues. A phosphoserine mark is found at S904 and S907. Residues 938-950 (SANTSDTVSDQTG) are compositionally biased toward polar residues.

Its subcellular location is the nucleus. Functionally, may function as a transcription factor. The polypeptide is Zinc finger protein 280D (Znf280d) (Mus musculus (Mouse)).